The following is a 455-amino-acid chain: Phosphoglucosamine mutase (455 aa).

Ser-108 serves as the catalytic Phosphoserine intermediate. 4 residues coordinate Mg(2+): Ser-108, Asp-248, Asp-250, and Asp-252. At Ser-108 the chain carries Phosphoserine.

Belongs to the phosphohexose mutase family. The cofactor is Mg(2+). In terms of processing, activated by phosphorylation.

It catalyses the reaction alpha-D-glucosamine 1-phosphate = D-glucosamine 6-phosphate. Its function is as follows. Catalyzes the conversion of glucosamine-6-phosphate to glucosamine-1-phosphate. The protein is Phosphoglucosamine mutase of Leuconostoc mesenteroides subsp. mesenteroides (strain ATCC 8293 / DSM 20343 / BCRC 11652 / CCM 1803 / JCM 6124 / NCDO 523 / NBRC 100496 / NCIMB 8023 / NCTC 12954 / NRRL B-1118 / 37Y).